The chain runs to 89 residues: DNA/RNA-binding protein Alba (89 aa).

Lys-11 carries the post-translational modification N6-acetyllysine.

The protein belongs to the histone-like Alba family. Acetylated. Acetylation at Lys-11 decreases DNA-binding affinity.

It is found in the cytoplasm. It localises to the chromosome. Functionally, binds double-stranded DNA tightly but without sequence specificity. Involved in DNA compaction. The polypeptide is DNA/RNA-binding protein Alba (Thermoplasma acidophilum (strain ATCC 25905 / DSM 1728 / JCM 9062 / NBRC 15155 / AMRC-C165)).